Here is a 123-residue protein sequence, read N- to C-terminus: Dihydroneopterin triphosphate 2'-epimerase (123 aa).

The protein belongs to the DHNA family. Homooctamer. Dimer of tetramers.

The catalysed reaction is 7,8-dihydroneopterin 3'-triphosphate = 7,8-dihydromonapterin 3'-triphosphate. In terms of biological role, catalyzes the epimerization of carbon 2' of the side chain of 7,8-dihydroneopterin triphosphate (H2NTP) to form 7,8-dihydromonapterin triphosphate (H2MTP). Is required for tetrahydromonapterin biosynthesis. The polypeptide is Dihydroneopterin triphosphate 2'-epimerase (Pseudomonas aeruginosa (strain ATCC 15692 / DSM 22644 / CIP 104116 / JCM 14847 / LMG 12228 / 1C / PRS 101 / PAO1)).